The chain runs to 720 residues: Engulfment and cell motility protein 3 (720 aa).

Residues 307 to 479 (EQREQLQVLR…VVREQLARTL (173 aa)) form the ELMO domain. The PH domain maps to 542–664 (RLCEGTLFRK…TDGLSALLGS (123 aa)). An SH3-binding motif is present at residues 696-706 (PERPPPVPPPP).

Probably interacts directly with the SH3-domain of DOCK1 via its SH3-binding site. Part of a complex with DOCK1 and RAC1. Interacts with ADGRB3.

It localises to the cytoplasm. Its function is as follows. Involved in cytoskeletal rearrangements required for phagocytosis of apoptotic cells and cell motility. Acts in association with DOCK1 and CRK. Was initially proposed to be required in complex with DOCK1 to activate Rac Rho small GTPases. May enhance the guanine nucleotide exchange factor (GEF) activity of DOCK1. The polypeptide is Engulfment and cell motility protein 3 (ELMO3) (Homo sapiens (Human)).